Consider the following 211-residue polypeptide: Molybdenum cofactor guanylyltransferase (211 aa).

GTP is bound by residues 12-14 (LAG), K25, N55, D73, and D103. Mg(2+) is bound at residue D103.

It belongs to the MobA family. In terms of assembly, monomer. Requires Mg(2+) as cofactor.

It localises to the cytoplasm. It catalyses the reaction Mo-molybdopterin + GTP + H(+) = Mo-molybdopterin guanine dinucleotide + diphosphate. In terms of biological role, transfers a GMP moiety from GTP to Mo-molybdopterin (Mo-MPT) cofactor (Moco or molybdenum cofactor) to form Mo-molybdopterin guanine dinucleotide (Mo-MGD) cofactor. This is Molybdenum cofactor guanylyltransferase from Albidiferax ferrireducens (strain ATCC BAA-621 / DSM 15236 / T118) (Rhodoferax ferrireducens).